The sequence spans 110 residues: Cell cycle protein GpsB (110 aa).

Residues 37–63 are a coiled coil; sequence KDYTVYIALVKELQEENAKLKAKATSA. The interval 59-79 is disordered; that stretch reads KATSAPASRPAYASATSEPSH. Low complexity predominate over residues 60–75; it reads ATSAPASRPAYASATS.

It belongs to the GpsB family. As to quaternary structure, forms polymers through the coiled coil domains. Interacts with PBP1, MreC and EzrA.

The protein localises to the cytoplasm. Functionally, divisome component that associates with the complex late in its assembly, after the Z-ring is formed, and is dependent on DivIC and PBP2B for its recruitment to the divisome. Together with EzrA, is a key component of the system that regulates PBP1 localization during cell cycle progression. Its main role could be the removal of PBP1 from the cell pole after pole maturation is completed. Also contributes to the recruitment of PBP1 to the division complex. Not essential for septum formation. In Streptococcus thermophilus (strain CNRZ 1066), this protein is Cell cycle protein GpsB.